Consider the following 323-residue polypeptide: Acetyl-coenzyme A carboxylase carboxyl transferase subunit alpha (323 aa).

Residues 36–293 (ELELLSAKAQ…KEEVVKNLQI (258 aa)) form the CoA carboxyltransferase C-terminal domain.

This sequence belongs to the AccA family. As to quaternary structure, acetyl-CoA carboxylase is a heterohexamer composed of biotin carboxyl carrier protein (AccB), biotin carboxylase (AccC) and two subunits each of ACCase subunit alpha (AccA) and ACCase subunit beta (AccD).

It is found in the cytoplasm. The catalysed reaction is N(6)-carboxybiotinyl-L-lysyl-[protein] + acetyl-CoA = N(6)-biotinyl-L-lysyl-[protein] + malonyl-CoA. It functions in the pathway lipid metabolism; malonyl-CoA biosynthesis; malonyl-CoA from acetyl-CoA: step 1/1. In terms of biological role, component of the acetyl coenzyme A carboxylase (ACC) complex. First, biotin carboxylase catalyzes the carboxylation of biotin on its carrier protein (BCCP) and then the CO(2) group is transferred by the carboxyltransferase to acetyl-CoA to form malonyl-CoA. In Carboxydothermus hydrogenoformans (strain ATCC BAA-161 / DSM 6008 / Z-2901), this protein is Acetyl-coenzyme A carboxylase carboxyl transferase subunit alpha.